Reading from the N-terminus, the 302-residue chain is MQALLNEILDAVRPLIGQGKVADYIPALGTVPANQLGIAVYGNDGEMYCAGDAETPFSVQSISKVFSLVQAIEHSGEAIWERLGHEPSGQPFNSLVQLEFERGRPRNPFINAGALVICDINQSRFAAPALSMRDFVRRLSGNPQVMVDGKVADSEYQHRARNAAMAYLMQSFGNFHNDVEAVLRSYFSHCALRMNCIDLARAFCFLANDGFCKHSGEQILTRRQTQQVNSIMATSGLYDEAGNFAYRVGLPGKSGVGGGIVAVVPGQFTVCVWSPELNTAGNSLAGMAALEMLSSRIGWSVF.

Substrate contacts are provided by Ser-61, Asn-111, Glu-155, Asn-162, Tyr-186, Tyr-238, and Val-256.

Belongs to the glutaminase family. As to quaternary structure, homotetramer.

The catalysed reaction is L-glutamine + H2O = L-glutamate + NH4(+). This Pseudomonas fluorescens (strain Pf0-1) protein is Glutaminase.